A 348-amino-acid polypeptide reads, in one-letter code: Anthranilate phosphoribosyltransferase (348 aa).

5-phospho-alpha-D-ribose 1-diphosphate-binding positions include Gly-81, 84-85 (GD), 91-94 (NVST), 109-117 (KHGNRAVSG), and Ser-121. Position 81 (Gly-81) interacts with anthranilate. Ser-93 lines the Mg(2+) pocket. Asn-112 lines the anthranilate pocket. Arg-167 is a binding site for anthranilate. Asp-226 and Glu-227 together coordinate Mg(2+).

This sequence belongs to the anthranilate phosphoribosyltransferase family. As to quaternary structure, homodimer. Mg(2+) serves as cofactor.

The enzyme catalyses N-(5-phospho-beta-D-ribosyl)anthranilate + diphosphate = 5-phospho-alpha-D-ribose 1-diphosphate + anthranilate. Its pathway is amino-acid biosynthesis; L-tryptophan biosynthesis; L-tryptophan from chorismate: step 2/5. In terms of biological role, catalyzes the transfer of the phosphoribosyl group of 5-phosphorylribose-1-pyrophosphate (PRPP) to anthranilate to yield N-(5'-phosphoribosyl)-anthranilate (PRA). The chain is Anthranilate phosphoribosyltransferase from Azotobacter vinelandii (strain DJ / ATCC BAA-1303).